Consider the following 190-residue polypeptide: Protein LZIC (190 aa).

A coiled-coil region spans residues 2–63 (ASRGKTETSK…SEFNDSLKKI (62 aa)).

It belongs to the CTNNBIP1 family. Does not interact with CTNNB1.

The polypeptide is Protein LZIC (Lzic) (Rattus norvegicus (Rat)).